The primary structure comprises 314 residues: Aspartate carbamoyltransferase catalytic subunit (314 aa).

The carbamoyl phosphate site is built by Arg-58 and Thr-59. L-aspartate is bound at residue Lys-86. Carbamoyl phosphate contacts are provided by Arg-108, His-136, and Gln-139. Arg-169 and Arg-223 together coordinate L-aspartate. 2 residues coordinate carbamoyl phosphate: Gly-264 and Pro-265.

The protein belongs to the aspartate/ornithine carbamoyltransferase superfamily. ATCase family. As to quaternary structure, heterododecamer (2C3:3R2) of six catalytic PyrB chains organized as two trimers (C3), and six regulatory PyrI chains organized as three dimers (R2).

The catalysed reaction is carbamoyl phosphate + L-aspartate = N-carbamoyl-L-aspartate + phosphate + H(+). The protein operates within pyrimidine metabolism; UMP biosynthesis via de novo pathway; (S)-dihydroorotate from bicarbonate: step 2/3. Its function is as follows. Catalyzes the condensation of carbamoyl phosphate and aspartate to form carbamoyl aspartate and inorganic phosphate, the committed step in the de novo pyrimidine nucleotide biosynthesis pathway. This Opitutus terrae (strain DSM 11246 / JCM 15787 / PB90-1) protein is Aspartate carbamoyltransferase catalytic subunit.